A 100-amino-acid polypeptide reads, in one-letter code: Large ribosomal subunit protein uL23 (100 aa).

The protein belongs to the universal ribosomal protein uL23 family. In terms of assembly, part of the 50S ribosomal subunit. Contacts protein L29, and trigger factor when it is bound to the ribosome.

One of the early assembly proteins it binds 23S rRNA. One of the proteins that surrounds the polypeptide exit tunnel on the outside of the ribosome. Forms the main docking site for trigger factor binding to the ribosome. The protein is Large ribosomal subunit protein uL23 of Shewanella frigidimarina (strain NCIMB 400).